The primary structure comprises 296 residues: tRNA U34 carboxymethyltransferase (296 aa).

Residues Lys-64, Trp-78, Lys-83, Gly-102, 124-126, 151-152, Tyr-171, and Arg-286 each bind carboxy-S-adenosyl-L-methionine; these read DPS and VE.

The protein belongs to the class I-like SAM-binding methyltransferase superfamily. CmoB family. In terms of assembly, homotetramer.

The catalysed reaction is carboxy-S-adenosyl-L-methionine + 5-hydroxyuridine(34) in tRNA = 5-carboxymethoxyuridine(34) in tRNA + S-adenosyl-L-homocysteine + H(+). Its function is as follows. Catalyzes carboxymethyl transfer from carboxy-S-adenosyl-L-methionine (Cx-SAM) to 5-hydroxyuridine (ho5U) to form 5-carboxymethoxyuridine (cmo5U) at position 34 in tRNAs. This chain is tRNA U34 carboxymethyltransferase, found in Sulfurimonas denitrificans (strain ATCC 33889 / DSM 1251) (Thiomicrospira denitrificans (strain ATCC 33889 / DSM 1251)).